The chain runs to 186 residues: Cytochrome c oxidase polypeptide 5, mitochondrial (186 aa).

The transit peptide at 1–20 directs the protein to the mitochondrion; it reads MYLSKIICKKVPMKLLCTRN. The Mitochondrial matrix portion of the chain corresponds to 21 to 107; that stretch reads AATVSAAATN…GPRAFSHISQ (87 aa). Residues 108 to 128 form a helical membrane-spanning segment; sequence KTVFWGTVAGLTIGVVLFGLI. At 129–186 the chain is on the mitochondrial intermembrane side; it reads RTQAAPSPRTMTREWQEKSNEYMKENKINPISGEASEGFKGRGQISGGIFSPSEKDKK. The tract at residues 149–186 is disordered; sequence EYMKENKINPISGEASEGFKGRGQISGGIFSPSEKDKK.

The protein belongs to the cytochrome c oxidase IV family. As to quaternary structure, component of the cytochrome c oxidase (complex IV, CIV), a multisubunit enzyme composed of a catalytic core of 3 subunits and seevral supernumerary subunits. The complex exists as a monomer or a dimer and forms supercomplexes (SCs) in the inner mitochondrial membrane with ubiquinol-cytochrome c oxidoreductase (cytochrome b-c1 complex, complex III, CIII).

Its subcellular location is the mitochondrion inner membrane. Its pathway is energy metabolism; oxidative phosphorylation. In terms of biological role, component of the cytochrome c oxidase, the last enzyme in the mitochondrial electron transport chain which drives oxidative phosphorylation. The respiratory chain contains 3 multisubunit complexes succinate dehydrogenase (complex II, CII), ubiquinol-cytochrome c oxidoreductase (cytochrome b-c1 complex, complex III, CIII) and cytochrome c oxidase (complex IV, CIV), that cooperate to transfer electrons derived from NADH and succinate to molecular oxygen, creating an electrochemical gradient over the inner membrane that drives transmembrane transport and the ATP synthase. Cytochrome c oxidase is the component of the respiratory chain that catalyzes the reduction of oxygen to water. Electrons originating from reduced cytochrome c in the intermembrane space (IMS) are transferred via the dinuclear copper A center (CU(A)) of subunit 2 and heme A of subunit 1 to the active site in subunit 1, a binuclear center (BNC) formed by heme A3 and copper B (CU(B)). The BNC reduces molecular oxygen to 2 water molecules using 4 electrons from cytochrome c in the IMS and 4 protons from the mitochondrial matrix. This Schizosaccharomyces pombe (strain 972 / ATCC 24843) (Fission yeast) protein is Cytochrome c oxidase polypeptide 5, mitochondrial (cox5).